The following is a 285-amino-acid chain: uncharacterized protein (285 aa).

Residues 6–26 (IKYFSTIIVAVVAVLAGWWLW) form a helical membrane-spanning segment.

This sequence belongs to the membrane fusion protein (MFP) (TC 8.A.1) family.

It is found in the membrane. This is an uncharacterized protein from Escherichia coli (strain K12).